A 363-amino-acid polypeptide reads, in one-letter code: S-methylmethionine--homocysteine S-methyltransferase BHMT2 (363 aa).

Residues 11 to 305 (KGILERLDSG…YHIRAIAEEL (295 aa)) enclose the Hcy-binding domain. Zn(2+)-binding residues include Cys-208, Cys-290, and Cys-291. Phosphoserine is present on Ser-321.

Homotetramer. Zn(2+) is required as a cofactor. Expressed in fetal heart, lung, liver, kidney and eye.

It carries out the reaction S-methyl-L-methionine + L-homocysteine = 2 L-methionine + H(+). The protein operates within amino-acid biosynthesis; L-methionine biosynthesis via de novo pathway; L-methionine from L-homocysteine (BhmT route): step 1/1. Involved in the regulation of homocysteine metabolism. Converts homocysteine to methionine using S-methylmethionine (SMM) as a methyl donor. The protein is S-methylmethionine--homocysteine S-methyltransferase BHMT2 (Bhmt2) of Mus musculus (Mouse).